Reading from the N-terminus, the 316-residue chain is Ribosomal protein L11 methyltransferase (316 aa).

Residues T162, G183, D205, and N248 each contribute to the S-adenosyl-L-methionine site.

This sequence belongs to the methyltransferase superfamily. PrmA family.

Its subcellular location is the cytoplasm. The enzyme catalyses L-lysyl-[protein] + 3 S-adenosyl-L-methionine = N(6),N(6),N(6)-trimethyl-L-lysyl-[protein] + 3 S-adenosyl-L-homocysteine + 3 H(+). Functionally, methylates ribosomal protein L11. This is Ribosomal protein L11 methyltransferase from Levilactobacillus brevis (strain ATCC 367 / BCRC 12310 / CIP 105137 / JCM 1170 / LMG 11437 / NCIMB 947 / NCTC 947) (Lactobacillus brevis).